A 125-amino-acid chain; its full sequence is Sulfiredoxin, chloroplastic/mitochondrial (125 aa).

The transit peptide at 1-22 (MANLMMRLPISLRSFSVSASSS) directs the protein to the chloroplast and mitochondrion.

This sequence belongs to the sulfiredoxin family. Low expression in photosynthetic tissues such as leaves and sepals.

It localises to the plastid. It is found in the chloroplast. The protein resides in the mitochondrion. It carries out the reaction S-hydroxy-S-oxy-L-cysteinyl-[peroxiredoxin] + [protein]-dithiol + ATP = S-hydroxy-L-cysteinyl-[peroxiredoxin] + [protein]-disulfide + ADP + phosphate. Functionally, contributes to oxidative stress resistance by reducing cysteine-sulfinic acid formed under exposure to oxidants in a peroxiredoxin. May catalyze the reduction in a multi-step process by acting both as a specific phosphotransferase and a thioltransferase. Required to switch on the antioxidant pathway to regenerate the oxidative damage. In mitochondrion, catalyzes the retroreduction of the inactive sulfinic form of atypical Prx IIF using thioredoxin as reducing agent. This is Sulfiredoxin, chloroplastic/mitochondrial (SRX) from Arabidopsis thaliana (Mouse-ear cress).